The chain runs to 107 residues: Large ribosomal subunit protein P2-A (107 aa).

The tract at residues 85–107 is disordered; sequence GAAAPAAAAEEEEDDDMGFGLFD.

Belongs to the eukaryotic ribosomal protein P1/P2 family. In terms of assembly, P1 and P2 exist as dimers at the large ribosomal subunit. Post-translationally, phosphorylated.

Plays an important role in the elongation step of protein synthesis. The protein is Large ribosomal subunit protein P2-A of Trypanosoma cruzi.